The primary structure comprises 146 residues: Putative pre-16S rRNA nuclease (146 aa).

The protein belongs to the YqgF nuclease family.

The protein localises to the cytoplasm. Functionally, could be a nuclease involved in processing of the 5'-end of pre-16S rRNA. The protein is Putative pre-16S rRNA nuclease of Pseudomonas savastanoi pv. phaseolicola (strain 1448A / Race 6) (Pseudomonas syringae pv. phaseolicola (strain 1448A / Race 6)).